We begin with the raw amino-acid sequence, 93 residues long: Acylphosphatase (93 aa).

An Acylphosphatase-like domain is found at 5-93 (AKQIVVRGRV…PNFRGFQVTG (89 aa)). Residues arginine 20 and asparagine 38 contribute to the active site.

The protein belongs to the acylphosphatase family.

The catalysed reaction is an acyl phosphate + H2O = a carboxylate + phosphate + H(+). This chain is Acylphosphatase (acyP), found in Lacticaseibacillus paracasei (strain ATCC 334 / BCRC 17002 / CCUG 31169 / CIP 107868 / KCTC 3260 / NRRL B-441) (Lactobacillus paracasei).